The primary structure comprises 208 residues: Small ribosomal subunit protein uS4 (208 aa).

The region spanning 98 to 161 is the S4 RNA-binding domain; the sequence is QRLDNLVYRM…KNNPQILRAV (64 aa).

This sequence belongs to the universal ribosomal protein uS4 family. Part of the 30S ribosomal subunit. Contacts protein S5. The interaction surface between S4 and S5 is involved in control of translational fidelity.

One of the primary rRNA binding proteins, it binds directly to 16S rRNA where it nucleates assembly of the body of the 30S subunit. Its function is as follows. With S5 and S12 plays an important role in translational accuracy. The sequence is that of Small ribosomal subunit protein uS4 from Campylobacter hominis (strain ATCC BAA-381 / DSM 21671 / CCUG 45161 / LMG 19568 / NCTC 13146 / CH001A).